A 390-amino-acid polypeptide reads, in one-letter code: Leu/Ile/Val-binding protein homolog 6 (390 aa).

A signal peptide spans Met1–Ala21.

Belongs to the leucine-binding protein family.

Functionally, component of an amino-acid transport system. In Brucella abortus (strain 2308), this protein is Leu/Ile/Val-binding protein homolog 6.